The chain runs to 313 residues: Ribosomal RNA small subunit methyltransferase H (313 aa).

Residues 35–37 (GGH), D55, F79, D100, and Q107 each bind S-adenosyl-L-methionine.

Belongs to the methyltransferase superfamily. RsmH family.

The protein resides in the cytoplasm. It catalyses the reaction cytidine(1402) in 16S rRNA + S-adenosyl-L-methionine = N(4)-methylcytidine(1402) in 16S rRNA + S-adenosyl-L-homocysteine + H(+). Specifically methylates the N4 position of cytidine in position 1402 (C1402) of 16S rRNA. The polypeptide is Ribosomal RNA small subunit methyltransferase H (Burkholderia orbicola (strain MC0-3)).